A 465-amino-acid polypeptide reads, in one-letter code: L-cystine uptake protein TcyP (465 aa).

10 helical membrane-spanning segments follow: residues 3–23 (LFLT…LFYM), 34–54 (VLLA…FFAP), 73–93 (YVRF…LSAF), 105–125 (ISAL…AIGI), 184–204 (PTSA…YLGV), 224–246 (AIIM…AIMT), 263–283 (FVLA…IILA), 338–358 (LSIG…VMIA), 370–390 (FILL…GVGG), and 394–414 (FAAI…GLLI).

Belongs to the dicarboxylate/amino acid:cation symporter (DAACS) (TC 2.A.23) family.

It is found in the membrane. Its function is as follows. Mediates uptake of L-cystine, the oxidized form of L-cysteine. The protein is L-cystine uptake protein TcyP of Shouchella clausii (strain KSM-K16) (Alkalihalobacillus clausii).